The following is a 267-amino-acid chain: Phosphatidylserine decarboxylase proenzyme (267 aa).

Active-site charge relay system; for autoendoproteolytic cleavage activity residues include D78, H132, and S236. Catalysis depends on S236, which acts as the Schiff-base intermediate with substrate; via pyruvic acid; for decarboxylase activity. Pyruvic acid (Ser); by autocatalysis is present on S236.

This sequence belongs to the phosphatidylserine decarboxylase family. PSD-B subfamily. Prokaryotic type I sub-subfamily. As to quaternary structure, heterodimer of a large membrane-associated beta subunit and a small pyruvoyl-containing alpha subunit. Pyruvate serves as cofactor. In terms of processing, is synthesized initially as an inactive proenzyme. Formation of the active enzyme involves a self-maturation process in which the active site pyruvoyl group is generated from an internal serine residue via an autocatalytic post-translational modification. Two non-identical subunits are generated from the proenzyme in this reaction, and the pyruvate is formed at the N-terminus of the alpha chain, which is derived from the carboxyl end of the proenzyme. The autoendoproteolytic cleavage occurs by a canonical serine protease mechanism, in which the side chain hydroxyl group of the serine supplies its oxygen atom to form the C-terminus of the beta chain, while the remainder of the serine residue undergoes an oxidative deamination to produce ammonia and the pyruvoyl prosthetic group on the alpha chain. During this reaction, the Ser that is part of the protease active site of the proenzyme becomes the pyruvoyl prosthetic group, which constitutes an essential element of the active site of the mature decarboxylase.

Its subcellular location is the cell membrane. It carries out the reaction a 1,2-diacyl-sn-glycero-3-phospho-L-serine + H(+) = a 1,2-diacyl-sn-glycero-3-phosphoethanolamine + CO2. Its pathway is phospholipid metabolism; phosphatidylethanolamine biosynthesis; phosphatidylethanolamine from CDP-diacylglycerol: step 2/2. Its function is as follows. Catalyzes the formation of phosphatidylethanolamine (PtdEtn) from phosphatidylserine (PtdSer). This Helicobacter pylori (strain Shi470) protein is Phosphatidylserine decarboxylase proenzyme.